We begin with the raw amino-acid sequence, 63 residues long: Cytochrome c oxidase subunit 7C, mitochondrial (63 aa).

Residues Met1–Arg16 constitute a mitochondrion transit peptide. Residues Ser17–Asn33 lie on the Mitochondrial matrix side of the membrane. N6-acetyllysine; alternate is present on Lys25. Residue Lys25 is modified to N6-succinyllysine; alternate. The helical transmembrane segment at Lys34–Leu60 threads the bilayer. At Leu61–Thr63 the chain is on the mitochondrial intermembrane side.

This sequence belongs to the cytochrome c oxidase VIIc family. Component of the cytochrome c oxidase (complex IV, CIV), a multisubunit enzyme composed of 14 subunits. The complex is composed of a catalytic core of 3 subunits MT-CO1, MT-CO2 and MT-CO3, encoded in the mitochondrial DNA, and 11 supernumerary subunits COX4I, COX5A, COX5B, COX6A, COX6B, COX6C, COX7A, COX7B, COX7C, COX8 and NDUFA4, which are encoded in the nuclear genome. The complex exists as a monomer or a dimer and forms supercomplexes (SCs) in the inner mitochondrial membrane with NADH-ubiquinone oxidoreductase (complex I, CI) and ubiquinol-cytochrome c oxidoreductase (cytochrome b-c1 complex, complex III, CIII), resulting in different assemblies (supercomplex SCI(1)III(2)IV(1) and megacomplex MCI(2)III(2)IV(2)). Interacts with RAB5IF.

The protein resides in the mitochondrion inner membrane. It functions in the pathway energy metabolism; oxidative phosphorylation. Functionally, component of the cytochrome c oxidase, the last enzyme in the mitochondrial electron transport chain which drives oxidative phosphorylation. The respiratory chain contains 3 multisubunit complexes succinate dehydrogenase (complex II, CII), ubiquinol-cytochrome c oxidoreductase (cytochrome b-c1 complex, complex III, CIII) and cytochrome c oxidase (complex IV, CIV), that cooperate to transfer electrons derived from NADH and succinate to molecular oxygen, creating an electrochemical gradient over the inner membrane that drives transmembrane transport and the ATP synthase. Cytochrome c oxidase is the component of the respiratory chain that catalyzes the reduction of oxygen to water. Electrons originating from reduced cytochrome c in the intermembrane space (IMS) are transferred via the dinuclear copper A center (CU(A)) of subunit 2 and heme A of subunit 1 to the active site in subunit 1, a binuclear center (BNC) formed by heme A3 and copper B (CU(B)). The BNC reduces molecular oxygen to 2 water molecules using 4 electrons from cytochrome c in the IMS and 4 protons from the mitochondrial matrix. The chain is Cytochrome c oxidase subunit 7C, mitochondrial (COX7C) from Pongo pygmaeus (Bornean orangutan).